Here is a 330-residue protein sequence, read N- to C-terminus: MGQPLLLLLLVYTYIPGSWGLRCLQCENTTSCSVEECTPGQDLCRTTVLSVWEGGNEMNVVRKGCTHPDKTNRSMSYRAADQIITLSETVCRSDLCNKPNPGRDATVSRNRYLECASCSSTDLSCERGWDQTMQCLKSRDQCVDVITHRSLKENPGDERHIRGCGILPGCPGPTGFHNNHTFHFLRCCNTTKCNAGSVLELQNLPPNGLQCYSCEGNGAHRCSSEETFLIDCRGPMNQCLEATGTKGLRNPSYTIRGCAAPSWCQSLHVAEAFDLTHVNVSCCTGSGCNHPARDDQPGKGGAPKTSPAHLSFFVSLLLTARLWGATLLCT.

An N-terminal signal peptide occupies residues 1 to 20 (MGQPLLLLLLVYTYIPGSWG). 3 UPAR/Ly6 domains span residues 21 to 112 (LRCL…RNRY), 113 to 208 (LECA…PPNG), and 209 to 300 (LQCY…PGKG). Disulfide bonds link C23-C44, C26-C32, and C37-C65. N28 carries an N-linked (GlcNAc...) asparagine glycan. A glycan (N-linked (GlcNAc...) asparagine) is linked at N72. 11 disulfide bridges follow: C91–C96, C115–C142, C118–C125, C135–C164, C170–C187, C188–C193, C211–C239, C214–C222, C232–C258, C264–C282, and C283–C288. N-linked (GlcNAc...) asparagine glycosylation is found at N179 and N189. N-linked (GlcNAc...) asparagine glycosylation occurs at N279. The GPI-anchor amidated glycine moiety is linked to residue G300. The propeptide at 301 to 330 (GAPKTSPAHLSFFVSLLLTARLWGATLLCT) is removed in mature form.

Monomer. Interacts (via the UPAR/Ly6 domains) with SRPX2. Interacts with MRC2. Interacts with SORL1 (via N-terminal ectodomain); this interaction decreases PLAUR internalization. The ternary complex composed of PLAUR-PLAU-SERPINE1 also interacts with SORL1. Interacts with CD82; this interaction prevents PLAUR from binding to its high affinity ligand PLAU.

It localises to the cell membrane. Its function is as follows. Acts as a receptor for urokinase plasminogen activator. Plays a role in localizing and promoting plasmin formation. Mediates the proteolysis-independent signal transduction activation effects of U-PA. In Bos taurus (Bovine), this protein is Urokinase plasminogen activator surface receptor (PLAUR).